We begin with the raw amino-acid sequence, 135 residues long: MNRVKSREYLLQLAYQMEITSETALETFNSFMENEDISKDDLDLAYIKSGLLGIEENKEKLDSLIESQLVKWKLNRISKVNLSILRISTYEILFAEDVPGKVSINEAIELCKKYSDNKSVSFINGVLDKVYKNIK.

Belongs to the NusB family.

Functionally, involved in transcription antitermination. Required for transcription of ribosomal RNA (rRNA) genes. Binds specifically to the boxA antiterminator sequence of the ribosomal RNA (rrn) operons. This chain is Transcription antitermination protein NusB, found in Clostridium perfringens (strain SM101 / Type A).